The following is a 227-amino-acid chain: Cytochrome c oxidase subunit 2 (227 aa).

Over 1 to 14 (MANHSQLGFQDASS) the chain is Mitochondrial intermembrane. A helical transmembrane segment spans residues 15–45 (PIMEELVEFHDHALMVALAICSLVLYLLTLM). The Mitochondrial matrix portion of the chain corresponds to 46 to 58 (LTQKLSSNTVDAQ). Residues 59 to 86 (EVELIWTILPAIVLVLLALPSLQILYMM) traverse the membrane as a helical segment. Residues 87-227 (DEIEEPDLTL…FETWSSLLSS (141 aa)) lie on the Mitochondrial intermembrane side of the membrane. 6 residues coordinate Cu cation: His160, Cys195, Glu197, Cys199, His203, and Met206. Glu197 is a Mg(2+) binding site.

It belongs to the cytochrome c oxidase subunit 2 family. Component of the cytochrome c oxidase (complex IV, CIV), a multisubunit enzyme composed of 14 subunits. The complex is composed of a catalytic core of 3 subunits MT-CO1, MT-CO2 and MT-CO3, encoded in the mitochondrial DNA, and 11 supernumerary subunits COX4I, COX5A, COX5B, COX6A, COX6B, COX6C, COX7A, COX7B, COX7C, COX8 and NDUFA4, which are encoded in the nuclear genome. The complex exists as a monomer or a dimer and forms supercomplexes (SCs) in the inner mitochondrial membrane with NADH-ubiquinone oxidoreductase (complex I, CI) and ubiquinol-cytochrome c oxidoreductase (cytochrome b-c1 complex, complex III, CIII), resulting in different assemblies (supercomplex SCI(1)III(2)IV(1) and megacomplex MCI(2)III(2)IV(2)). Found in a complex with TMEM177, COA6, COX18, COX20, SCO1 and SCO2. Interacts with TMEM177 in a COX20-dependent manner. Interacts with COX20. Interacts with COX16. Requires Cu cation as cofactor.

It localises to the mitochondrion inner membrane. The catalysed reaction is 4 Fe(II)-[cytochrome c] + O2 + 8 H(+)(in) = 4 Fe(III)-[cytochrome c] + 2 H2O + 4 H(+)(out). Functionally, component of the cytochrome c oxidase, the last enzyme in the mitochondrial electron transport chain which drives oxidative phosphorylation. The respiratory chain contains 3 multisubunit complexes succinate dehydrogenase (complex II, CII), ubiquinol-cytochrome c oxidoreductase (cytochrome b-c1 complex, complex III, CIII) and cytochrome c oxidase (complex IV, CIV), that cooperate to transfer electrons derived from NADH and succinate to molecular oxygen, creating an electrochemical gradient over the inner membrane that drives transmembrane transport and the ATP synthase. Cytochrome c oxidase is the component of the respiratory chain that catalyzes the reduction of oxygen to water. Electrons originating from reduced cytochrome c in the intermembrane space (IMS) are transferred via the dinuclear copper A center (CU(A)) of subunit 2 and heme A of subunit 1 to the active site in subunit 1, a binuclear center (BNC) formed by heme A3 and copper B (CU(B)). The BNC reduces molecular oxygen to 2 water molecules using 4 electrons from cytochrome c in the IMS and 4 protons from the mitochondrial matrix. This Coturnix japonica (Japanese quail) protein is Cytochrome c oxidase subunit 2 (MT-CO2).